The following is a 202-amino-acid chain: Small ribosomal subunit protein uS4 (202 aa).

The S4 RNA-binding domain occupies 94–157 (SRLDNLVYRM…KDLPIVAAGA (64 aa)).

It belongs to the universal ribosomal protein uS4 family. Part of the 30S ribosomal subunit. Contacts protein S5. The interaction surface between S4 and S5 is involved in control of translational fidelity.

Functionally, one of the primary rRNA binding proteins, it binds directly to 16S rRNA where it nucleates assembly of the body of the 30S subunit. Its function is as follows. With S5 and S12 plays an important role in translational accuracy. The protein is Small ribosomal subunit protein uS4 of Malacoplasma penetrans (strain HF-2) (Mycoplasma penetrans).